Here is a 632-residue protein sequence, read N- to C-terminus: Mitochondrial distribution and morphology protein 34 (632 aa).

Residues 1–203 (MSFKVNWNSL…LPTLIHQLSL (203 aa)) form the SMP-LTD domain. Disordered stretches follow at residues 221–253 (ANAS…TSSL) and 384–435 (KPKR…SSTL). Low complexity predominate over residues 224 to 252 (STSSSSTSSTSSSTTSSSSSSSPSSFTSS). The span at 384–400 (KPKRRVIRLGKSKNKSK) shows a compositional bias: basic residues. Over residues 401–412 (SKTETKTEHNDE) the composition is skewed to basic and acidic residues. Low complexity predominate over residues 422-435 (PLSSTPASSSSSTL).

The protein belongs to the MDM34 family. As to quaternary structure, component of the ER-mitochondria encounter structure (ERMES) or MDM complex, composed of MMM1, MDM10, MDM12 and MDM34.

It is found in the mitochondrion outer membrane. In terms of biological role, component of the ERMES/MDM complex, which serves as a molecular tether to connect the endoplasmic reticulum (ER) and mitochondria. Components of this complex are involved in the control of mitochondrial shape and protein biogenesis, and function in nonvesicular lipid trafficking between the ER and mitochondria. MDM34 is required for the interaction of the ER-resident membrane protein MMM1 and the outer mitochondrial membrane-resident beta-barrel protein MDM10. The chain is Mitochondrial distribution and morphology protein 34 from Lodderomyces elongisporus (strain ATCC 11503 / CBS 2605 / JCM 1781 / NBRC 1676 / NRRL YB-4239) (Yeast).